The primary structure comprises 707 residues: Coiled-coil domain-containing protein 177 (707 aa).

2 disordered regions span residues 1-65 (MVDP…EGGR) and 183-294 (PSAG…SALT). Low complexity-rich tracts occupy residues 38–49 (AASSASASASAA), 183–215 (PSAGSSSSCSSASLPASPAPRAARKASPSPSSA), and 243–258 (ALSSESGASSSSYSGE). S311 is subject to Phosphoserine. Positions 364-605 (GQWELQRVHA…LQHATQVAEE (242 aa)) form a coiled coil. 4 disordered regions span residues 372–426 (HAKQ…RSEE), 454–581 (KLQQ…EREH), 597–637 (QHAT…RDED), and 652–707 (ERSE…LDRK). 7 stretches are compositionally biased toward basic and acidic residues: residues 377–392 (REREEREKQRALEQGR), 399–426 (VEERRGRRGREEREAARRRQRQYERSEE), 454–484 (KLQQEQNLKQREEGLQEGRERAEQIRRERAQ), 491–514 (QRQEGQLQREKRELSRAERARHEA), 543–581 (ENYEHLVEQRTRELRERARREELQGRRAKEAAERKEREH), 618–637 (RLEKERAQRANKEKVERDED), and 652–664 (ERSEQLTRERRSA). The span at 665-675 (LESARSTARAS) shows a compositional bias: low complexity. The span at 677 to 707 (HVREKVREETNTRSFDRMVREAQLHASLDRK) shows a compositional bias: basic and acidic residues.

In Homo sapiens (Human), this protein is Coiled-coil domain-containing protein 177 (CCDC177).